A 108-amino-acid polypeptide reads, in one-letter code: Small ribosomal subunit protein bS16 (108 aa).

The interval Glu82–Asn108 is disordered. Positions Pro96–Asn108 are enriched in basic residues.

It belongs to the bacterial ribosomal protein bS16 family.

This is Small ribosomal subunit protein bS16 from Mycoplasma mycoides subsp. mycoides SC (strain CCUG 32753 / NCTC 10114 / PG1).